Here is a 210-residue protein sequence, read N- to C-terminus: Probable GTP-binding protein EngB (210 aa).

An EngB-type G domain is found at 25 to 199; it reads TGIEVAFAGR…RQKLDSWFNE (175 aa). GTP-binding positions include 33 to 40, 60 to 64, 78 to 81, 145 to 148, and 178 to 180; these read GRSNAGKS, GRTQL, DLPG, TKAD, and FSS. The Mg(2+) site is built by Ser-40 and Thr-62.

Belongs to the TRAFAC class TrmE-Era-EngA-EngB-Septin-like GTPase superfamily. EngB GTPase family. Mg(2+) serves as cofactor.

In terms of biological role, necessary for normal cell division and for the maintenance of normal septation. The protein is Probable GTP-binding protein EngB of Klebsiella pneumoniae subsp. pneumoniae (strain ATCC 700721 / MGH 78578).